A 204-amino-acid polypeptide reads, in one-letter code: MDDKELFPKVDILNLTFSPKSEISEDVFKQMFSSLDRLWWSRLVISIRGYVINYVQQNDEVLFSCDDAFIKIHQKLAERNSQFEDAFEYLTAIFHVIREKNTLIQMISNPKSISTTKISPNLDRSFNIIHGNLTPKTIQLTIAQLPAYTMFIKVVVNLQQRWENEKLKKKSIRFETDPEWEPDERVVLFQTFASGMTSRIRYDK.

This is an uncharacterized protein from Caenorhabditis elegans.